Here is a 174-residue protein sequence, read N- to C-terminus: 3-hydroxydecanoyl-[acyl-carrier-protein] dehydratase (174 aa).

The active site involves His71.

It belongs to the thioester dehydratase family. FabA subfamily. Homodimer.

The protein localises to the cytoplasm. It catalyses the reaction a (3R)-hydroxyacyl-[ACP] = a (2E)-enoyl-[ACP] + H2O. It carries out the reaction (3R)-hydroxydecanoyl-[ACP] = (2E)-decenoyl-[ACP] + H2O. The enzyme catalyses (2E)-decenoyl-[ACP] = (3Z)-decenoyl-[ACP]. Its pathway is lipid metabolism; fatty acid biosynthesis. Its function is as follows. Necessary for the introduction of cis unsaturation into fatty acids. Catalyzes the dehydration of (3R)-3-hydroxydecanoyl-ACP to E-(2)-decenoyl-ACP and then its isomerization to Z-(3)-decenoyl-ACP. Can catalyze the dehydratase reaction for beta-hydroxyacyl-ACPs with saturated chain lengths up to 16:0, being most active on intermediate chain length. In Nitrobacter hamburgensis (strain DSM 10229 / NCIMB 13809 / X14), this protein is 3-hydroxydecanoyl-[acyl-carrier-protein] dehydratase.